A 194-amino-acid polypeptide reads, in one-letter code: A-type ATP synthase subunit E (194 aa).

Positions 35–56 are disordered; the sequence is DAEADADQIREEREAEVERTIE. Basic and acidic residues predominate over residues 41 to 56; that stretch reads DQIREEREAEVERTIE.

Belongs to the V-ATPase E subunit family. As to quaternary structure, has multiple subunits with at least A(3), B(3), C, D, E, F, H, I and proteolipid K(x).

The protein localises to the cell membrane. Component of the A-type ATP synthase that produces ATP from ADP in the presence of a proton gradient across the membrane. The polypeptide is A-type ATP synthase subunit E (Haloarcula marismortui (strain ATCC 43049 / DSM 3752 / JCM 8966 / VKM B-1809) (Halobacterium marismortui)).